The chain runs to 414 residues: tRNA methyltransferase 10 homolog C (414 aa).

A mitochondrion-targeting transit peptide spans 1-35 (MNVTVRFLRPFARYLVPYTFHRTRSNSYSRVLQRY). At S79 the chain carries Phosphoserine. The stretch at 133 to 162 (GKEMMKKAKQMKKEMKAAAREEAKRARSLE) forms a coiled coil. The region spanning 186–378 (LGWKGVQAMQ…KFVPRRKHTG (193 aa)) is the SAM-dependent MTase TRM10-type domain.

This sequence belongs to the class IV-like SAM-binding methyltransferase superfamily. TRM10 family. As to quaternary structure, component of mitochondrial ribonuclease P, a complex composed of TRMT10C/MRPP1, HSD17B10/MRPP2 and PRORP/MRPP3. Interacts with HSD17B10/MRPP2; forming the MRPP1-MRPP2 subcomplex of the mitochondrial ribonuclease P complex. Interacts with GRSF1.

It localises to the mitochondrion matrix. The protein localises to the mitochondrion nucleoid. It carries out the reaction adenosine(9) in tRNA + S-adenosyl-L-methionine = N(1)-methyladenosine(9) in tRNA + S-adenosyl-L-homocysteine + H(+). The enzyme catalyses guanosine(9) in tRNA + S-adenosyl-L-methionine = N(1)-methylguanosine(9) in tRNA + S-adenosyl-L-homocysteine + H(+). The catalysed reaction is an adenosine in mRNA + S-adenosyl-L-methionine = an N(1)-methyladenosine in mRNA + S-adenosyl-L-homocysteine + H(+). Mitochondrial tRNA N(1)-methyltransferase involved in mitochondrial tRNA maturation. Component of mitochondrial ribonuclease P, a complex composed of TRMT10C/MRPP1, HSD17B10/MRPP2 and PRORP/MRPP3, which cleaves tRNA molecules in their 5'-ends. Together with HSD17B10/MRPP2, forms a subcomplex of the mitochondrial ribonuclease P, named MRPP1-MRPP2 subcomplex, which displays functions that are independent of the ribonuclease P activity. The MRPP1-MRPP2 subcomplex catalyzes the formation of N(1)-methylguanine and N(1)-methyladenine at position 9 (m1G9 and m1A9, respectively) in tRNAs; TRMT10C/MRPP1 acting as the catalytic N(1)-methyltransferase subunit. The MRPP1-MRPP2 subcomplex also acts as a tRNA maturation platform: following 5'-end cleavage by the mitochondrial ribonuclease P complex, the MRPP1-MRPP2 subcomplex enhances the efficiency of 3'-processing catalyzed by ELAC2, retains the tRNA product after ELAC2 processing and presents the nascent tRNA to the mitochondrial CCA tRNA nucleotidyltransferase TRNT1 enzyme. In addition to tRNA N(1)-methyltransferase activity, TRMT10C/MRPP1 also acts as a mRNA N(1)-methyltransferase by mediating methylation of adenosine residues at the N(1) position of MT-ND5 mRNA. Associates with mitochondrial DNA complexes at the nucleoids to initiate RNA processing and ribosome assembly. The chain is tRNA methyltransferase 10 homolog C from Rattus norvegicus (Rat).